A 493-amino-acid polypeptide reads, in one-letter code: Galactose-1-phosphate uridylyltransferase (493 aa).

This sequence belongs to the galactose-1-phosphate uridylyltransferase type 2 family.

The protein resides in the cytoplasm. It catalyses the reaction alpha-D-galactose 1-phosphate + UDP-alpha-D-glucose = alpha-D-glucose 1-phosphate + UDP-alpha-D-galactose. The protein operates within carbohydrate metabolism; galactose metabolism. This is Galactose-1-phosphate uridylyltransferase from Streptococcus thermophilus (strain ATCC BAA-250 / LMG 18311).